The following is a 458-amino-acid chain: MDGAGEKRVRAKGSREVDWISNLPETLLCQVLFYLPTKDVVKSSVLSSRWRNLWKYVPGFNLSYCDFHVRNTFSYDHNTFLRFVDSFMGFNSQSCLQSFRLEYDSSGYGEPKLALIRRWINSVVSRKVKYLGVLDDSCDNYEFEMPPTLYTCETLVYLTLDGLSLASPKFVSLPSLKELHLSIVKFADHMALETLISQCPVLENLNINRSFCDDFEFTCVRSQSLLSFTHVADTDEMLNEDLVVAIDAPKLKYLRLSDHRIASFILNDLASLVEADIDTVFNLICKKMFNPNDLNKRNMIRDFLVGISSIKTLIIASSTLEVIYDYSRCEPLPLFRNLSSLRVDFYGYKWEMLPIFLESCPNLKSLVVGSANYREKEGINILSVPRGFLSSLEYVKIERPLKGEAMEMKLVSYLLENSTILKKLTLCLDDSIKKEESVILKELNTIPRLSSACQVVIL.

An F-box domain is found at 17 to 67 (VDWISNLPETLLCQVLFYLPTKDVVKSSVLSSRWRNLWKYVPGFNLSYCDF). LRR repeat units follow at residues 152 to 183 (CETL…HLSI), 184 to 209 (VKFA…NINR), 231 to 258 (VADT…RLSD), 302 to 327 (DFLV…YDYS), and 345 to 370 (FYGY…VVGS). The FBD domain occupies 376-428 (KEGINILSVPRGFLSSLEYVKIERPLKGEAMEMKLVSYLLENSTILKKLTLCL).

This is F-box/FBD/LRR-repeat protein At1g78750 from Arabidopsis thaliana (Mouse-ear cress).